A 273-amino-acid chain; its full sequence is Undecaprenyl-diphosphatase (273 aa).

The next 8 helical transmembrane spans lie at 3–23 (IVEI…EFAP), 48–68 (AANT…VVVF), 92–112 (MQVI…EDYI), 116–136 (LFST…MIAA), 152–172 (ITYK…WPGF), 193–213 (ADFT…LSLL), 220–240 (TIDA…FALI), and 252–272 (IRLV…YIVY).

Belongs to the UppP family.

The protein localises to the cell membrane. It catalyses the reaction di-trans,octa-cis-undecaprenyl diphosphate + H2O = di-trans,octa-cis-undecaprenyl phosphate + phosphate + H(+). Its function is as follows. Catalyzes the dephosphorylation of undecaprenyl diphosphate (UPP). Confers resistance to bacitracin. The protein is Undecaprenyl-diphosphatase of Geobacillus sp. (strain WCH70).